We begin with the raw amino-acid sequence, 166 residues long: Putative pre-16S rRNA nuclease (166 aa).

The tract at residues 1 to 24 is disordered; the sequence is MPDTAAPTPDRPGPDDPGRGRRLG.

This sequence belongs to the YqgF nuclease family.

It localises to the cytoplasm. Functionally, could be a nuclease involved in processing of the 5'-end of pre-16S rRNA. The chain is Putative pre-16S rRNA nuclease from Mycobacteroides abscessus (strain ATCC 19977 / DSM 44196 / CCUG 20993 / CIP 104536 / JCM 13569 / NCTC 13031 / TMC 1543 / L948) (Mycobacterium abscessus).